The chain runs to 468 residues: Pancreatic lipase-related protein 2 (468 aa).

A signal peptide spans 1–16; it reads MLLCWIVSLLLATVGG. Cysteines 20 and 26 form a disulfide. The required for galactolipase activity stretch occupies residues 92 to 104; sequence VHGFIDKGEDGWL. An intrachain disulfide couples Cys108 to Cys119. The active-site Nucleophile is the Ser170. Asp194 acts as the Charge relay system in catalysis. Residues Glu205, Arg208, Asp210, and Asp213 each coordinate Ca(2+). Cys255 and Cys279 are oxidised to a cystine. Residues 256–278 are required for galactolipase activity; sequence QKNILSTIVDINGIWEGTQNFVA. Residue His281 is the Charge relay system of the active site. Disulfide bonds link Cys303–Cys314 and Cys317–Cys322. N-linked (GlcNAc...) asparagine glycosylation is found at Asn352 and Asn427. The PLAT domain maps to 356–468; the sequence is WRYKVSVTLS…EDVLQSLYPC (113 aa). A disulfide bridge connects residues Cys452 and Cys468.

Belongs to the AB hydrolase superfamily. Lipase family. Expressed in pancreatic acinar cells (at protein level).

The protein resides in the secreted. It is found in the zymogen granule membrane. The protein localises to the cell projection. It localises to the neuron projection. It catalyses the reaction a triacylglycerol + H2O = a diacylglycerol + a fatty acid + H(+). The catalysed reaction is a 1,2-diacyl-3-O-(beta-D-galactosyl)-sn-glycerol + 2 H2O = 3-beta-D-galactosyl-sn-glycerol + 2 a fatty acid + 2 H(+). It carries out the reaction 1,2,3-tri-(9Z-octadecenoyl)-glycerol + H2O = di-(9Z)-octadecenoylglycerol + (9Z)-octadecenoate + H(+). The enzyme catalyses di-(9Z)-octadecenoylglycerol + H2O = (9Z-octadecenoyl)-glycerol + (9Z)-octadecenoate + H(+). It catalyses the reaction (9Z-octadecenoyl)-glycerol + H2O = glycerol + (9Z)-octadecenoate + H(+). The catalysed reaction is 1-(9Z-octadecenoyl)-glycerol + H2O = glycerol + (9Z)-octadecenoate + H(+). It carries out the reaction 1,2,3-tripropanoylglycerol + H2O = dipropanoylglycerol + propanoate + H(+). The enzyme catalyses 1,2,3-tributanoylglycerol + H2O = dibutanoylglycerol + butanoate + H(+). It catalyses the reaction 1,2,3-trioctanoylglycerol + H2O = dioctanoylglycerol + octanoate + H(+). The catalysed reaction is 1,2-didecanoylglycerol + H2O = decanoylglycerol + decanoate + H(+). It carries out the reaction long chain 1,2-diacyl-3-O-beta-D-galactosyl-sn-glycerol + H2O = long chain acyl-3-O-beta-D-galactosyl-sn-glycerol + a fatty acid + H(+). The enzyme catalyses 1,2-dioctanoyl-3-O-beta-D-galactosyl-sn-glycerol + H2O = octanoyl-3-(beta-D-galactosyl)-sn-glycerol + octanoate + H(+). It catalyses the reaction 1,2-didodecanoyl-3-beta-D-galactosyl-sn-glycerol + H2O = dodecanoyl-3-beta-D-galactosyl-sn-glycerol + dodecanoate + H(+). The catalysed reaction is 1-beta-D-galactosyl-2,3-didodecanoyl-sn-glycerol + H2O = 1-beta-D-galactosyl-dodecanoyl-sn-glycerol + dodecanoate + H(+). It carries out the reaction a 1,2-diacyl-3-O-[alpha-D-galactosyl-(1-&gt;6)-beta-D-galactosyl]-sn-glycerol + H2O = acyl-3-O-[alpha-D-galactosyl-(1-&gt;6)-beta-D-galactosyl]-sn-glycerol + a fatty acid + H(+). The enzyme catalyses long chain 1,2-diacyl-3-O-[alpha-D-galactosyl-(1-&gt;6)-beta-D-galactosyl]-sn-glycerol + H2O = long chain acyl-3-O-[alpha-D-galactosyl-(1-&gt;6)-beta-D-galactosyl]-sn-glycerol + a fatty acid + H(+). It catalyses the reaction 1,2-dioctanoyl-3-O-[alpha-D-galactosyl-(1-&gt;6)-beta-D-galactosyl]-sn-glycerol + H2O = octanoyl-3-O-[alpha-D-galactosyl-(1-&gt;6)-beta-D-galactosyl]-sn-glycerol + octanoate + H(+). The catalysed reaction is 1,2-didodecanoyl-3-O-[alpha-D-galactosyl-(1-&gt;6)-beta-D-galactosyl]-sn-glycerol + H2O = dodecanoyl-3-O-[alpha-D-galactosyl-(1-&gt;6)-beta-D-galactosyl]-sn-glycerol + dodecanoate + H(+). It carries out the reaction a 1,2-diacyl-sn-glycero-3-phosphocholine + H2O = a monoacyl-sn-glycero-3-phosphocholine + a fatty acid + H(+). Its pathway is glycerolipid metabolism; triacylglycerol degradation. The protein operates within glycolipid metabolism. With respect to regulation, CLPS stimulates triacylglycerol lipase activity. Triacylglycerol lipase activity is not inhibited by increasing bile salt concentration. Functionally, lipase that primarily hydrolyzes triglycerides and galactosylglycerides. In neonates, may play a major role in pancreatic digestion of dietary fats such as milk fat globules enriched in long-chain triglycerides. Hydrolyzes short-, medium- and long-chain fatty acyls in triglycerides without apparent positional specificity. Can completely deacylate triacylglycerols. When the liver matures and bile salt synthesis increases, likely functions mainly as a galactolipase and monoacylglycerol lipase. Hydrolyzes monogalactosyldiglycerols (MGDG) and digalactosyldiacylglycerols (DGDG) present in a plant-based diet, releasing long-chain polyunsaturated fatty acids. Hydrolyzes medium- and long-chain fatty acyls in galactolipids. May act together with LIPF to hydrolyze partially digested triglycerides. Hydrolyzes long-chain monoglycerides with high efficiency. In cytotoxic T cells, contributes to perforin-dependent cell lysis, but is unlikely to mediate direct cytotoxicity. Also has low phospholipase activity. In neurons, required for the localization of the phospholipid 1-oleoyl-2-palmitoyl-PC (OPPC) to neurite tips through acyl chain remodeling of membrane phospholipids. The resulting OPPC-rich lipid membrane domain recruits the t-SNARE protein STX4 by selectively interacting with the STX4 transmembrane domain and this promotes surface expression of the dopamine transporter SLC6A3/DAT at neurite tips by facilitating fusion of SLC6A3-containing transport vesicles with the plasma membrane. The protein is Pancreatic lipase-related protein 2 of Rattus norvegicus (Rat).